The chain runs to 252 residues: 3-deoxy-manno-octulosonate cytidylyltransferase (252 aa).

It belongs to the KdsB family.

The protein resides in the cytoplasm. It catalyses the reaction 3-deoxy-alpha-D-manno-oct-2-ulosonate + CTP = CMP-3-deoxy-beta-D-manno-octulosonate + diphosphate. It participates in nucleotide-sugar biosynthesis; CMP-3-deoxy-D-manno-octulosonate biosynthesis; CMP-3-deoxy-D-manno-octulosonate from 3-deoxy-D-manno-octulosonate and CTP: step 1/1. It functions in the pathway bacterial outer membrane biogenesis; lipopolysaccharide biosynthesis. In terms of biological role, activates KDO (a required 8-carbon sugar) for incorporation into bacterial lipopolysaccharide in Gram-negative bacteria. The chain is 3-deoxy-manno-octulosonate cytidylyltransferase from Solibacter usitatus (strain Ellin6076).